A 262-amino-acid polypeptide reads, in one-letter code: MALGETKGIILFTKDFKEKDKLVKIFTESYGKLMFFVKGAHRKNNPLLPAILPFTEAVYIGNFREEGLSFLNSSKEVQPFRNIQQDIFINAYGTYILNLVDAAIEDQHYDPNLFQFTHMALSALNEQKDPEIITNIFEIQLLERFGVRPEWHHCVACGETQGKFDYSSKYSGVLCEKHWHLDEQRYHADPRAIHFIRLFSQVSYEKVQNIQVKEETKKSIRETIDMLYDEYVGLHLKSKKFIDQMKTWENTLKIPPRKKEEK.

Belongs to the RecO family.

Functionally, involved in DNA repair and RecF pathway recombination. The chain is DNA repair protein RecO from Enterococcus faecalis (strain ATCC 700802 / V583).